The primary structure comprises 345 residues: N-acetyl-gamma-glutamyl-phosphate reductase (345 aa).

The active site involves cysteine 151.

Belongs to the NAGSA dehydrogenase family. Type 1 subfamily.

Its subcellular location is the cytoplasm. The catalysed reaction is N-acetyl-L-glutamate 5-semialdehyde + phosphate + NADP(+) = N-acetyl-L-glutamyl 5-phosphate + NADPH + H(+). The protein operates within amino-acid biosynthesis; L-arginine biosynthesis; N(2)-acetyl-L-ornithine from L-glutamate: step 3/4. Its function is as follows. Catalyzes the NADPH-dependent reduction of N-acetyl-5-glutamyl phosphate to yield N-acetyl-L-glutamate 5-semialdehyde. In Clostridium novyi (strain NT), this protein is N-acetyl-gamma-glutamyl-phosphate reductase.